Consider the following 211-residue polypeptide: Protein GrpE (211 aa).

The disordered stretch occupies residues 1–43 (MTDETTKNGPDATAADAAADAAANVEIDNSVQEEAKQPDPLEL). Residues 11-23 (DATAADAAADAAA) are compositionally biased toward low complexity. Positions 33-43 (EEAKQPDPLEL) are enriched in basic and acidic residues.

This sequence belongs to the GrpE family. As to quaternary structure, homodimer.

It is found in the cytoplasm. Its function is as follows. Participates actively in the response to hyperosmotic and heat shock by preventing the aggregation of stress-denatured proteins, in association with DnaK and GrpE. It is the nucleotide exchange factor for DnaK and may function as a thermosensor. Unfolded proteins bind initially to DnaJ; upon interaction with the DnaJ-bound protein, DnaK hydrolyzes its bound ATP, resulting in the formation of a stable complex. GrpE releases ADP from DnaK; ATP binding to DnaK triggers the release of the substrate protein, thus completing the reaction cycle. Several rounds of ATP-dependent interactions between DnaJ, DnaK and GrpE are required for fully efficient folding. This Rhizobium etli (strain ATCC 51251 / DSM 11541 / JCM 21823 / NBRC 15573 / CFN 42) protein is Protein GrpE.